The primary structure comprises 275 residues: Large ribosomal subunit protein uL2 (275 aa).

Basic and acidic residues predominate over residues 28–38; it reads RPYDGLLEKKS. Disordered stretches follow at residues 28–58 and 223–275; these read RPYD…GGGH and VAMN…RKAK. The span at 254 to 275 shows a compositional bias: basic residues; the sequence is KGHKTRKNKRTDKLIVRRRKAK.

This sequence belongs to the universal ribosomal protein uL2 family. As to quaternary structure, part of the 50S ribosomal subunit. Forms a bridge to the 30S subunit in the 70S ribosome.

Functionally, one of the primary rRNA binding proteins. Required for association of the 30S and 50S subunits to form the 70S ribosome, for tRNA binding and peptide bond formation. It has been suggested to have peptidyltransferase activity; this is somewhat controversial. Makes several contacts with the 16S rRNA in the 70S ribosome. The polypeptide is Large ribosomal subunit protein uL2 (Chromohalobacter salexigens (strain ATCC BAA-138 / DSM 3043 / CIP 106854 / NCIMB 13768 / 1H11)).